The chain runs to 203 residues: Small ribosomal subunit protein uS2 (203 aa).

This sequence belongs to the universal ribosomal protein uS2 family.

This Methanopyrus kandleri (strain AV19 / DSM 6324 / JCM 9639 / NBRC 100938) protein is Small ribosomal subunit protein uS2.